The sequence spans 336 residues: Ferredoxin--NADP reductase 1 (336 aa).

The FAD site is built by glutamate 37, lysine 45, phenylalanine 50, valine 90, leucine 125, aspartate 287, and threonine 328.

It belongs to the ferredoxin--NADP reductase type 2 family. In terms of assembly, homodimer. Requires FAD as cofactor.

The enzyme catalyses 2 reduced [2Fe-2S]-[ferredoxin] + NADP(+) + H(+) = 2 oxidized [2Fe-2S]-[ferredoxin] + NADPH. This chain is Ferredoxin--NADP reductase 1, found in Bacillus velezensis (strain DSM 23117 / BGSC 10A6 / LMG 26770 / FZB42) (Bacillus amyloliquefaciens subsp. plantarum).